The primary structure comprises 665 residues: Mitochondrial Rho GTPase 1 (665 aa).

Topologically, residues 1–634 are cytoplasmic; sequence MTNDVIRIVV…NQDPEEETNT (634 aa). Positions 3-177 constitute a Miro 1 domain; the sequence is NDVIRIVVCG…FYLCQKAVMH (175 aa). Residues 12 to 19, 61 to 67, and 119 to 122 contribute to the GTP site; these read GDEGVGKS, DTQFSNS, and NVFD. 2 EF-hand domains span residues 193–228 and 313–348; these read NAVA…CFGR and EGYR…TPGI. 9 residues coordinate Ca(2+): Asp206, Asp208, Asp210, Tyr212, Glu217, Asp326, Asp328, Asp330, and Glu337. The 167-residue stretch at 452-618 folds into the Miro 2 domain; the sequence is RSVFNCFVLG…FIQLAEAAQQ (167 aa). GTP is bound by residues 461–468, 498–502, and 567–570; these read GSHMSGKT, EMTGG, and LKAD. Residues 635–655 form a helical; Anchor for type IV membrane protein membrane-spanning segment; it reads IMPFALAGGATVLLAAAVAWI. Over 656-665 the chain is Mitochondrial intermembrane; that stretch reads FKNVRVAGRE.

It belongs to the mitochondrial Rho GTPase family.

It localises to the mitochondrion outer membrane. Its function is as follows. Mitochondrial GTPase involved in mitochondrial trafficking. Probably involved in control of anterograde transport of mitochondria and their subcellular distribution. The sequence is that of Mitochondrial Rho GTPase 1 (GEM1) from Yarrowia lipolytica (strain CLIB 122 / E 150) (Yeast).